Consider the following 197-residue polypeptide: Imidazoleglycerol-phosphate dehydratase (197 aa).

It belongs to the imidazoleglycerol-phosphate dehydratase family.

Its subcellular location is the cytoplasm. It carries out the reaction D-erythro-1-(imidazol-4-yl)glycerol 3-phosphate = 3-(imidazol-4-yl)-2-oxopropyl phosphate + H2O. The protein operates within amino-acid biosynthesis; L-histidine biosynthesis; L-histidine from 5-phospho-alpha-D-ribose 1-diphosphate: step 6/9. The sequence is that of Imidazoleglycerol-phosphate dehydratase from Pseudomonas putida (strain W619).